Here is a 219-residue protein sequence, read N- to C-terminus: Envelope protein US9 homolog (219 aa).

The Intravirion segment spans residues 1–193 (MEKAEAAAVV…RHRRRRVALT (193 aa)). A Di-leucine internalization motif motif is present at residues 145-146 (LL). The interval 153 to 168 (DYDSESGCYYSESDNE) is acidic. Phosphoserine; by host CK2 occurs at positions 163 and 165. A helical; Signal-anchor for type II membrane protein membrane pass occupies residues 194-214 (VAGVILVVVLCAISGIVGAFL). The Virion surface portion of the chain corresponds to 215–219 (ARVFP).

It belongs to the alphaherpesvirinae envelope protein US9 family. In terms of processing, phosphorylated on serines within the acidic cluster. Phosphorylation determines whether endocytosed viral US9 traffics to the trans-Golgi network or recycles to the cell membrane.

It localises to the virion membrane. The protein localises to the host Golgi apparatus membrane. The protein resides in the host smooth endoplasmic reticulum membrane. It is found in the host cell membrane. Its function is as follows. Essential for the anterograde spread of the infection throughout the host nervous system. Together with the gE/gI heterodimer, US9 is involved in the sorting and transport of viral structural components toward axon tips. The polypeptide is Envelope protein US9 homolog (Equine herpesvirus 1 (strain Ab4p) (EHV-1)).